The chain runs to 83 residues: RNA-binding protein Hfq (83 aa).

Residues 11 to 71 (DTFLNFVRKN…ISTIMPGQPI (61 aa)) form the Sm domain.

Belongs to the Hfq family. In terms of assembly, homohexamer.

In terms of biological role, RNA chaperone that binds small regulatory RNA (sRNAs) and mRNAs to facilitate mRNA translational regulation in response to envelope stress, environmental stress and changes in metabolite concentrations. Also binds with high specificity to tRNAs. In Methylocella silvestris (strain DSM 15510 / CIP 108128 / LMG 27833 / NCIMB 13906 / BL2), this protein is RNA-binding protein Hfq.